The sequence spans 203 residues: Small ribosomal subunit protein uS7B (203 aa).

It belongs to the universal ribosomal protein uS7 family. In terms of assembly, component of the small ribosomal subunit (SSU). Mature yeast ribosomes consist of a small (40S) and a large (60S) subunit. The 40S small subunit contains 1 molecule of ribosomal RNA (18S rRNA) and at least 33 different proteins. The large 60S subunit contains 3 rRNA molecules (25S, 5.8S and 5S rRNA) and at least 46 different proteins.

It is found in the cytoplasm. Component of the ribosome, a large ribonucleoprotein complex responsible for the synthesis of proteins in the cell. The small ribosomal subunit (SSU) binds messenger RNAs (mRNAs) and translates the encoded message by selecting cognate aminoacyl-transfer RNA (tRNA) molecules. The large subunit (LSU) contains the ribosomal catalytic site termed the peptidyl transferase center (PTC), which catalyzes the formation of peptide bonds, thereby polymerizing the amino acids delivered by tRNAs into a polypeptide chain. The nascent polypeptides leave the ribosome through a tunnel in the LSU and interact with protein factors that function in enzymatic processing, targeting, and the membrane insertion of nascent chains at the exit of the ribosomal tunnel. This chain is Small ribosomal subunit protein uS7B (rps502), found in Schizosaccharomyces pombe (strain 972 / ATCC 24843) (Fission yeast).